Consider the following 492-residue polypeptide: GTPase Obg (492 aa).

The Obg domain occupies 2–159 (PRFVDRVVIH…RELTLELKTV (158 aa)). The OBG-type G domain maps to 160-340 (ADVGLIGFPS…LIFGLWQMIS (181 aa)). Residues 166–173 (GFPSAGKS), 191–195 (FTTLV), 212–215 (DVPG), 292–295 (NKID), and 321–323 (STV) contribute to the GTP site. Residues S173 and T193 each contribute to the Mg(2+) site. The region spanning 358-438 (PVPVDDSGFR…IGDMTFDWEP (81 aa)) is the OCT domain. Residues 449–492 (SGRGTDARLERTERVGAAERKAARRQRRTGDDAERGTTERGENT) are disordered. 2 stretches are compositionally biased toward basic and acidic residues: residues 453–469 (TDARLERTERVGAAERK) and 476–492 (RTGDDAERGTTERGENT).

Belongs to the TRAFAC class OBG-HflX-like GTPase superfamily. OBG GTPase family. Monomer. Mg(2+) is required as a cofactor.

Its subcellular location is the cytoplasm. An essential GTPase which binds GTP, GDP and possibly (p)ppGpp with moderate affinity, with high nucleotide exchange rates and a fairly low GTP hydrolysis rate. Plays a role in control of the cell cycle, stress response, ribosome biogenesis and in those bacteria that undergo differentiation, in morphogenesis control. In Mycobacterium avium (strain 104), this protein is GTPase Obg.